Reading from the N-terminus, the 165-residue chain is Transcription antitermination protein NusB (165 aa).

It belongs to the NusB family.

In terms of biological role, involved in transcription antitermination. Required for transcription of ribosomal RNA (rRNA) genes. Binds specifically to the boxA antiterminator sequence of the ribosomal RNA (rrn) operons. The protein is Transcription antitermination protein NusB of Chlorobium phaeobacteroides (strain DSM 266 / SMG 266 / 2430).